The primary structure comprises 56 residues: Preprotein translocase subunit SecG (56 aa).

Residues 1–29 (MAKDKTTLPPTGAGLMRFFDEDTRAIKVS) lie on the Cytoplasmic side of the membrane. Residues 30–51 (PKGVIAIVLVLIAFEVFLHLFG) traverse the membrane as a helical segment. Residues 52–56 (PSIFG) lie on the Extracellular side of the membrane.

Belongs to the SEC61-beta family. In terms of assembly, component of the protein translocase complex. Heterotrimer consisting of alpha (SecY), beta (SecG) and gamma (SecE) subunits. Can form oligomers of the heterotrimer.

The protein resides in the cell membrane. Involved in protein export. The function of the beta subunit is unknown, but it may be involved in stabilization of the trimeric complex. The polypeptide is Preprotein translocase subunit SecG (Thermococcus gammatolerans (strain DSM 15229 / JCM 11827 / EJ3)).